The primary structure comprises 95 residues: Aspartyl/glutamyl-tRNA(Asn/Gln) amidotransferase subunit C (95 aa).

It belongs to the GatC family. Heterotrimer of A, B and C subunits.

It catalyses the reaction L-glutamyl-tRNA(Gln) + L-glutamine + ATP + H2O = L-glutaminyl-tRNA(Gln) + L-glutamate + ADP + phosphate + H(+). It carries out the reaction L-aspartyl-tRNA(Asn) + L-glutamine + ATP + H2O = L-asparaginyl-tRNA(Asn) + L-glutamate + ADP + phosphate + 2 H(+). Functionally, allows the formation of correctly charged Asn-tRNA(Asn) or Gln-tRNA(Gln) through the transamidation of misacylated Asp-tRNA(Asn) or Glu-tRNA(Gln) in organisms which lack either or both of asparaginyl-tRNA or glutaminyl-tRNA synthetases. The reaction takes place in the presence of glutamine and ATP through an activated phospho-Asp-tRNA(Asn) or phospho-Glu-tRNA(Gln). The polypeptide is Aspartyl/glutamyl-tRNA(Asn/Gln) amidotransferase subunit C (Chlorobaculum parvum (strain DSM 263 / NCIMB 8327) (Chlorobium vibrioforme subsp. thiosulfatophilum)).